Here is a 170-residue protein sequence, read N- to C-terminus: Zinc finger protein 576 (170 aa).

The interval 1–29 (MEDPNPEENMKQQDSPKERSPQSPGGNIC) is disordered. Residues 8–20 (ENMKQQDSPKERS) are compositionally biased toward basic and acidic residues. 4 consecutive C2H2-type zinc fingers follow at residues 34 to 57 (PKCT…KREH), 71 to 93 (FICF…QRSH), 112 to 134 (FPCP…RQMH), and 143 to 165 (FACT…YIRH).

Belongs to the krueppel C2H2-type zinc-finger protein family.

It is found in the nucleus. Its function is as follows. May be involved in transcriptional regulation. The protein is Zinc finger protein 576 (ZNF576) of Homo sapiens (Human).